The chain runs to 241 residues: MVSFSKNKVLSAAVFASVLLLDNNNSEFNNNLFSKNAKGLNSNKRLLHESQAHAGDAHHAHHVADAHHAHHVADAHHAHHAANAHHAANAHHAANAHHAANAHHAANAHHAANAHHAANAHHAANAHHAANAHHAANAHHAANAHHAANAHHAANAHHAADANHGFHFNLHDNNSHTLHHAKANACFDDSHHDDAHHDGAHHDDAHHDGAHHDDAHHDGAHHDGAHHDGAHHNATTHHLHH.

The signal sequence occupies residues 1–21; the sequence is MVSFSKNKVLSAAVFASVLLL. Basic and acidic residues predominate over residues 52–76; the sequence is AHAGDAHHAHHVADAHHAHHVADAH. Disordered regions lie at residues 52–145 and 195–241; these read AHAG…ANAH and AHHD…HLHH. A compositionally biased stretch (low complexity) spans 84–145; it reads AHHAANAHHA…ANAHHAANAH (62 aa). Basic and acidic residues predominate over residues 195 to 231; that stretch reads AHHDGAHHDDAHHDGAHHDDAHHDGAHHDGAHHDGAH.

In Plasmodium falciparum, this protein is Histidine-rich protein PFHRP-III.